The following is a 168-amino-acid chain: Transcription antitermination protein NusB (168 aa).

Belongs to the NusB family.

Involved in transcription antitermination. Required for transcription of ribosomal RNA (rRNA) genes. Binds specifically to the boxA antiterminator sequence of the ribosomal RNA (rrn) operons. The sequence is that of Transcription antitermination protein NusB from Chlamydia trachomatis serovar L2 (strain ATCC VR-902B / DSM 19102 / 434/Bu).